The sequence spans 129 residues: Glycine cleavage system H protein (129 aa).

The Lipoyl-binding domain maps to 24–106; sequence TYTVGITEHA…YGQGWIFKIK (83 aa). An N6-lipoyllysine modification is found at lysine 65.

The protein belongs to the GcvH family. As to quaternary structure, the glycine cleavage system is composed of four proteins: P, T, L and H. Requires (R)-lipoate as cofactor.

In terms of biological role, the glycine cleavage system catalyzes the degradation of glycine. The H protein shuttles the methylamine group of glycine from the P protein to the T protein. The polypeptide is Glycine cleavage system H protein (Cronobacter sakazakii (strain ATCC BAA-894) (Enterobacter sakazakii)).